A 1064-amino-acid polypeptide reads, in one-letter code: Isoleucine--tRNA ligase, cytoplasmic (1064 aa).

The short motif at 42 to 52 (PFATGRPHHGH) is the 'HIGH' region element. The short motif at 597–601 (KMSKR) is the 'KMSKS' region element. Lys-600 lines the ATP pocket.

It belongs to the class-I aminoacyl-tRNA synthetase family.

The protein localises to the cytoplasm. It carries out the reaction tRNA(Ile) + L-isoleucine + ATP = L-isoleucyl-tRNA(Ile) + AMP + diphosphate. This is Isoleucine--tRNA ligase, cytoplasmic (irs1) from Schizosaccharomyces pombe (strain 972 / ATCC 24843) (Fission yeast).